The chain runs to 103 residues: Small ribosomal subunit protein uS14c (103 aa).

It belongs to the universal ribosomal protein uS14 family. Part of the 30S ribosomal subunit.

It is found in the plastid. The protein resides in the chloroplast. Functionally, binds 16S rRNA, required for the assembly of 30S particles. The sequence is that of Small ribosomal subunit protein uS14c from Lolium perenne (Perennial ryegrass).